The following is a 146-amino-acid chain: Replication and maintenance protein (146 aa).

This is Replication and maintenance protein (repL) from Bacillus subtilis.